Consider the following 115-residue polypeptide: Large ribosomal subunit protein uL22 (115 aa).

It belongs to the universal ribosomal protein uL22 family. In terms of assembly, part of the 50S ribosomal subunit.

Functionally, this protein binds specifically to 23S rRNA; its binding is stimulated by other ribosomal proteins, e.g. L4, L17, and L20. It is important during the early stages of 50S assembly. It makes multiple contacts with different domains of the 23S rRNA in the assembled 50S subunit and ribosome. In terms of biological role, the globular domain of the protein is located near the polypeptide exit tunnel on the outside of the subunit, while an extended beta-hairpin is found that lines the wall of the exit tunnel in the center of the 70S ribosome. This Enterococcus faecalis (strain ATCC 700802 / V583) protein is Large ribosomal subunit protein uL22.